Reading from the N-terminus, the 402-residue chain is Adenylyltransferase and sulfurtransferase MOCS3 (402 aa).

ATP is bound by residues Gly47, Asp68, 75 to 79, Lys92, and 136 to 137; these read DNLHR and DN. Residues Cys178 and Cys181 each coordinate Zn(2+). Cys195 (glycyl thioester intermediate; for adenylyltransferase activity) is an active-site residue. The Zn(2+) site is built by Cys253 and Cys256. The 98-residue stretch at 303 to 400 folds into the Rhodanese domain; it reads AARKQFLLDT…WALKINDEFP (98 aa). Catalysis depends on Cys359, which acts as the Cysteine persulfide intermediate; for sulfurtransferase activity.

In the N-terminal section; belongs to the HesA/MoeB/ThiF family. UBA4 subfamily. It depends on Zn(2+) as a cofactor.

It localises to the cytoplasm. The protein localises to the cytosol. It carries out the reaction [molybdopterin-synthase sulfur-carrier protein]-C-terminal Gly-Gly + ATP + H(+) = [molybdopterin-synthase sulfur-carrier protein]-C-terminal Gly-Gly-AMP + diphosphate. It catalyses the reaction [molybdopterin-synthase sulfur-carrier protein]-C-terminal Gly-Gly-AMP + S-sulfanyl-L-cysteinyl-[cysteine desulfurase] + AH2 = [molybdopterin-synthase sulfur-carrier protein]-C-terminal-Gly-aminoethanethioate + L-cysteinyl-[cysteine desulfurase] + A + AMP + 2 H(+). The protein operates within tRNA modification; 5-methoxycarbonylmethyl-2-thiouridine-tRNA biosynthesis. Its pathway is cofactor biosynthesis; molybdopterin biosynthesis. Its function is as follows. Plays a central role in 2-thiolation of mcm(5)S(2)U at tRNA wobble positions of cytosolic tRNA(Lys), tRNA(Glu) and tRNA(Gln). Also essential during biosynthesis of the molybdenum cofactor. Acts by mediating the C-terminal thiocarboxylation of sulfur carriers URM1 and MOCS2A. Its N-terminus first activates URM1 and MOCS2A as acyl-adenylates (-COAMP), then the persulfide sulfur on the catalytic cysteine is transferred to URM1 and MOCS2A to form thiocarboxylation (-COSH) of their C-terminus. The reaction probably involves hydrogen sulfide that is generated from the persulfide intermediate and that acts as a nucleophile towards URM1 and MOCS2A. Subsequently, a transient disulfide bond is formed. Does not use thiosulfate as sulfur donor; NFS1 probably acting as a sulfur donor for thiocarboxylation reactions. In Caenorhabditis briggsae, this protein is Adenylyltransferase and sulfurtransferase MOCS3.